The sequence spans 248 residues: Triosephosphate isomerase (248 aa).

2 residues coordinate substrate: Asn-10 and Lys-12. His-95 functions as the Electrophile in the catalytic mechanism. The active-site Proton acceptor is Glu-165.

The protein belongs to the triosephosphate isomerase family. In terms of assembly, homodimer.

It carries out the reaction D-glyceraldehyde 3-phosphate = dihydroxyacetone phosphate. Its pathway is carbohydrate biosynthesis; gluconeogenesis. It participates in carbohydrate degradation; glycolysis; D-glyceraldehyde 3-phosphate from glycerone phosphate: step 1/1. This chain is Triosephosphate isomerase (TPI1), found in Eremothecium gossypii (strain ATCC 10895 / CBS 109.51 / FGSC 9923 / NRRL Y-1056) (Yeast).